A 476-amino-acid chain; its full sequence is Sulfate adenylyltransferase subunit 1 (476 aa).

Residues 24–228 (KSLLRFLTCG…MAWYQGPTLL (205 aa)) form the tr-type G domain. Residues 33–40 (GSVDDGKS) are G1. 33-40 (GSVDDGKS) serves as a coordination point for GTP. The G2 stretch occupies residues 91–95 (GITID). The tract at residues 112–115 (DTPG) is G3. GTP-binding positions include 112-116 (DTPGH) and 167-170 (NKMD). The G4 stretch occupies residues 167-170 (NKMD). The tract at residues 205-207 (SAL) is G5.

It belongs to the TRAFAC class translation factor GTPase superfamily. Classic translation factor GTPase family. CysN/NodQ subfamily. As to quaternary structure, heterodimer composed of CysD, the smaller subunit, and CysN.

The enzyme catalyses sulfate + ATP + H(+) = adenosine 5'-phosphosulfate + diphosphate. It participates in sulfur metabolism; hydrogen sulfide biosynthesis; sulfite from sulfate: step 1/3. Functionally, with CysD forms the ATP sulfurylase (ATPS) that catalyzes the adenylation of sulfate producing adenosine 5'-phosphosulfate (APS) and diphosphate, the first enzymatic step in sulfur assimilation pathway. APS synthesis involves the formation of a high-energy phosphoric-sulfuric acid anhydride bond driven by GTP hydrolysis by CysN coupled to ATP hydrolysis by CysD. The sequence is that of Sulfate adenylyltransferase subunit 1 from Vibrio vulnificus (strain CMCP6).